A 234-amino-acid chain; its full sequence is Two-component response regulator ARR9 (234 aa).

The 138-residue stretch at 10 to 147 (HVLAVDDSLF…DLNKLKPHMM (138 aa)) folds into the Response regulatory domain. A 4-aspartylphosphate modification is found at Asp80.

Belongs to the ARR family. Type-A subfamily. Interacts with AHP1 and AHP3. In terms of processing, two-component system major event consists of a His-to-Asp phosphorelay between a sensor histidine kinase (HK) and a response regulator (RR). In plants, the His-to-Asp phosphorelay involves an additional intermediate named Histidine-containing phosphotransfer protein (HPt). This multistep phosphorelay consists of a His-Asp-His-Asp sequential transfer of a phosphate group between first a His and an Asp of the HK protein, followed by the transfer to a conserved His of the HPt protein and finally the transfer to an Asp in the receiver domain of the RR protein. As to expression, predominantly expressed in roots.

The protein localises to the nucleus. In terms of biological role, functions as a response regulator involved in His-to-Asp phosphorelay signal transduction system. Phosphorylation of the Asp residue in the receiver domain activates the ability of the protein to promote the transcription of target genes. Type-A response regulators seem to act as negative regulators of the cytokinin signaling. This Arabidopsis thaliana (Mouse-ear cress) protein is Two-component response regulator ARR9 (ARR9).